The primary structure comprises 367 residues: MSIIAKTVFIGLSGGVDSAVSALLLKKQYQEVIGVFMECWDETLNNDFYGHKKINNNKSGCSSFQDFQQAKKIANSLGIKLIKKNLIEAYWNKVFLPMIQSFKKGLTPNPDIWCNRFIKFGLLHDFCKQINPNSLFATGHYAKINMIENQPLLSIPKDTNKDQTYFLANVKKEQFQNVIFPLADLKKITVRNIARENNWEVADKKDSTGICFIGERHFSDFLKNYLPVKKGLIKDWKTKQTISEHDGVWFYTIGQRSGLNLGGLKQRHFVVAKDIETNELFVSCDKEELLKTTILLDQFNWLYTPKQLPSQVLVRIRHAQKPEIAKLKLLSDNKLEITFKNPVISVASGQFGVLYTLDQICLGAGLI.

ATP is bound by residues 11-18 (GLSGGVDS) and methionine 37. The interval 109–111 (NPD) is interaction with target base in tRNA. Cysteine 114 acts as the Nucleophile in catalysis. Cysteines 114 and 211 form a disulfide. An ATP-binding site is contributed by glycine 139. An interaction with tRNA region spans residues 161-163 (KDQ). Catalysis depends on cysteine 211, which acts as the Cysteine persulfide intermediate.

It belongs to the MnmA/TRMU family.

The protein resides in the cytoplasm. It carries out the reaction S-sulfanyl-L-cysteinyl-[protein] + uridine(34) in tRNA + AH2 + ATP = 2-thiouridine(34) in tRNA + L-cysteinyl-[protein] + A + AMP + diphosphate + H(+). Catalyzes the 2-thiolation of uridine at the wobble position (U34) of tRNA, leading to the formation of s(2)U34. The sequence is that of tRNA-specific 2-thiouridylase MnmA from Mycoplasma genitalium (strain ATCC 33530 / DSM 19775 / NCTC 10195 / G37) (Mycoplasmoides genitalium).